The sequence spans 1017 residues: MAGELISFGIQNLWNLLSQECELFQGVEDQVTELKRDLNMLSSFLKDANAKKHTSAVVKNCVEEIKEIIYDGEDTIETFVLEQNLGKTSGIKKSIRRLACIIPDRRRYALGIGGLSNRISKVIRDMQSFGVQQAIVDGGYKQPQGDKQREMRQKFSKDDDSDFVGLEANVKKLVGYLVDEANVQVVSITGMGGLGKTTLAKQVFNHEDVKHQFDGLSWVCVSQDFTRMNVWQKILRDLKPKEEEKKIMEMTQDTLQGELIRLLETSKSLIVLDDIWEKEDWELIKPIFPPTKGWKVLLTSRNESVAMRRNTSYINFKPECLTTEDSWTLFQRIALPMKDAAEFKIDEEKEELGKLMIKHCGGLPLAIRVLGGMLAEKYTSHDWRRLSENIGSHLVGGRTNFNDDNNNTCNNVLSLSFEELPSYLKHCFLYLAHFPEDYEIKVENLSYYWAAEGIFQPRHYDGETIRDVGDVYIEELVRRNMVISERDVKTSRFETCHLHDMMREVCLLKAKEENFLQITSSRPSTANLQSTVTSRRFVYQYPTTLHVEKDINNPKLRALVVVTLGSWNLAGSSFTRLELLRVLDLIEVKIKGGKLASCIGKLIHLRYLSLEYAEVTHIPYSLGNLKLLIYLNLASFGRSTFVPNVLMGMQELRYLALPSDMGRKTKLELSNLVKLETLENFSTENSSLEDLCGMVRLSTLNIKLIEETSLETLAASIGGLKYLEKLEIYDHGSEMRTKEAGIVFDFVHLKRLWLKLYMPRLSTEQHFPSHLTTLYLESCRLEEDPMPILEKLLQLKELELGFESFSGKKMVCSSGGFPQLQRLSLLKLEEWEDWKVEESSMPLLRTLDIQVCRKLKQLPDEHLPSHLTSISLFFCCLEKDPLPTLGRLVYLKELQLGFRTFSGRIMVCSGGGFPQLQKLSIYRLEEWEEWIVEQGSMPFLHTLYIDDCPKLKKLPDGLQFIYSLKNLKISERWKERLSEGGEEYYKVQHIPSVEFYHRVLHIFRSVGGDITGRLLMR.

The stretch at 25–52 forms a coiled coil; it reads QGVEDQVTELKRDLNMLSSFLKDANAKK. The 314-residue stretch at 147–460 folds into the NB-ARC domain; sequence KQREMRQKFS…AEGIFQPRHY (314 aa). 190 to 197 is an ATP binding site; sequence GMGGLGKT. LRR repeat units follow at residues 602 to 627, 649 to 674, 675 to 699, 768 to 791, 792 to 819, 841 to 865, and 937 to 962; these read LIHL…NLKL, MQEL…NLVK, LETL…RLST, PSHL…ILEK, LLQL…GFPQ, MPLL…HLPS, and MPFL…QFIY.

This sequence belongs to the disease resistance NB-LRR family.

Functionally, potential disease resistance protein. The sequence is that of Probable disease resistance protein RDL5 (RDL5) from Arabidopsis thaliana (Mouse-ear cress).